The sequence spans 131 residues: LHRGPPGSRGPMIPPLLSLPPPPRGRGPLRGGLGPRSGPYGRGWWGVNAEPPFPGPGHGGPSRGGFHKEQRNPRRLKSWSLIKNTCPPKDGPQVMEDKSDRPVCRHFAKKGHCRYEDLCAFYHPGANGPPL.

The segment at 1-77 (LHRGPPGSRG…KEQRNPRRLK (77 aa)) is disordered. Pro residues predominate over residues 12-25 (MIPPLLSLPPPPRG). Gly residues predominate over residues 28–44 (PLRGGLGPRSGPYGRGW). Residues 98–126 (KSDRPVCRHFAKKGHCRYEDLCAFYHPGA) form a C3H1-type zinc finger.

This chain is Proline-rich protein 3 (PRR3), found in Sus scrofa (Pig).